The chain runs to 194 residues: Mu-like prophage FluMu protein gp37 (194 aa).

This sequence to phage Mu protein gp37.

This is Mu-like prophage FluMu protein gp37 from Haemophilus influenzae (strain ATCC 51907 / DSM 11121 / KW20 / Rd).